The sequence spans 413 residues: Type II methyltransferase M.NaeI (413 aa).

The SAM-dependent MTase C5-type domain occupies 4-317; the sequence is LEVVEICAGA…KRIRAALNME (314 aa). C78 is a catalytic residue.

It belongs to the class I-like SAM-binding methyltransferase superfamily. C5-methyltransferase family.

It carries out the reaction a 2'-deoxycytidine in DNA + S-adenosyl-L-methionine = a 5-methyl-2'-deoxycytidine in DNA + S-adenosyl-L-homocysteine + H(+). Its function is as follows. A methylase that recognizes the double-stranded sequence 5'-GCCGGC-3', methylates C-? on both strands, and protects the DNA from cleavage by the NaeI endonuclease. In Lentzea aerocolonigenes (Lechevalieria aerocolonigenes), this protein is Type II methyltransferase M.NaeI.